The chain runs to 1377 residues: DNA-directed RNA polymerase subunit beta' (1377 aa).

The Zn(2+) site is built by cysteine 70, cysteine 72, cysteine 85, and cysteine 88. Mg(2+)-binding residues include aspartate 460, aspartate 462, and aspartate 464. Zn(2+) is bound by residues cysteine 808, cysteine 882, cysteine 889, and cysteine 892.

Belongs to the RNA polymerase beta' chain family. The RNAP catalytic core consists of 2 alpha, 1 beta, 1 beta' and 1 omega subunit. When a sigma factor is associated with the core the holoenzyme is formed, which can initiate transcription. Mg(2+) serves as cofactor. The cofactor is Zn(2+).

The enzyme catalyses RNA(n) + a ribonucleoside 5'-triphosphate = RNA(n+1) + diphosphate. DNA-dependent RNA polymerase catalyzes the transcription of DNA into RNA using the four ribonucleoside triphosphates as substrates. This chain is DNA-directed RNA polymerase subunit beta', found in Geotalea uraniireducens (strain Rf4) (Geobacter uraniireducens).